A 362-amino-acid chain; its full sequence is uncharacterized protein (362 aa).

Residue alanine 2 is modified to N-acetylalanine.

The protein belongs to the Gfo/Idh/MocA family. As to quaternary structure, homodimer.

This is an uncharacterized protein from Arabidopsis thaliana (Mouse-ear cress).